The chain runs to 336 residues: Glucokinase (336 aa).

12-17 (ADIGGT) provides a ligand contact to ATP.

It belongs to the bacterial glucokinase family.

It localises to the cytoplasm. The enzyme catalyses D-glucose + ATP = D-glucose 6-phosphate + ADP + H(+). The protein is Glucokinase of Helicobacter pylori (strain P12).